The following is a 1068-amino-acid chain: Retinoblastoma-like protein 1 (1068 aa).

Residue Thr332 is modified to Phosphothreonine; by CDK2. A Phosphothreonine; by CDK4 modification is found at Thr369. Position 385 is a phosphothreonine; by CDK2 (Thr385). The domain A stretch occupies residues Thr385–Lys584. The segment at Thr385 to Tyr949 is pocket; binds T and E1A. The tract at residues Val585 to Asn780 is spacer. The residue at position 640 (Ser640) is a Phosphoserine; by CDK2 and CDK4. 2 positions are modified to phosphoserine: Ser650 and Ser749. Ser762 carries the phosphoserine; by CDK2 modification. Residues Arg781–Tyr949 form a domain B region. Residues Ser964 and Ser975 each carry the phosphoserine; by CDK2 and CDK4 modification. The residue at position 988 (Ser988) is a Phosphoserine; by CDK2. The residue at position 997 (Thr997) is a Phosphothreonine; by CDK2. Residue Ser1009 is modified to Phosphoserine; by CDK2. Ser1041 is modified (phosphoserine).

The protein belongs to the retinoblastoma protein (RB) family. As to quaternary structure, component of the DREAM complex (also named LINC complex) at least composed of E2F4, E2F5, LIN9, LIN37, LIN52, LIN54, MYBL1, MYBL2, RBL1, RBL2, RBBP4, TFDP1 and TFDP2. The complex exists in quiescent cells where it represses cell cycle-dependent genes. It dissociates in S phase when LIN9, LIN37, LIN52 and LIN54 form a subcomplex that binds to MYBL2. Interacts with AATF. Interacts with KDM5A. Interacts with KMT5B and KMT5C. Interacts with USP4. Interacts with RBBP9. In terms of assembly, (Microbial infection) Interacts with SV40 and JC virus large T antigens. Large T antigen, but not E1A, binds only to the unphosphorylated form. (Microbial infection) Interacts with JC virus small t antigen. Post-translationally, cell-cycle arrest properties are inactivated by phosphorylation on Thr-332, Ser-640, Ser-964 and Ser-975 by CDK4.

It localises to the nucleus. In terms of biological role, key regulator of entry into cell division. Directly involved in heterochromatin formation by maintaining overall chromatin structure and, in particular, that of constitutive heterochromatin by stabilizing histone methylation. Recruits and targets histone methyltransferases KMT5B and KMT5C, leading to epigenetic transcriptional repression. Controls histone H4 'Lys-20' trimethylation. Probably acts as a transcription repressor by recruiting chromatin-modifying enzymes to promoters. Potent inhibitor of E2F-mediated trans-activation. May act as a tumor suppressor. The sequence is that of Retinoblastoma-like protein 1 (RBL1) from Homo sapiens (Human).